A 169-amino-acid polypeptide reads, in one-letter code: Pyrophosphate-energized proton pump 1 (169 aa).

3 consecutive transmembrane segments (helical) span residues 45 to 65 (YVVAGLLFGGLIPYLFGGIAM), 114 to 134 (VIPSLLPVLAPLVVYFGVLLI), and 141 to 161 (AFAALGAYLLAVIMNRVLVAI).

The protein belongs to the H(+)-translocating pyrophosphatase (TC 3.A.10) family. Homodimer. It depends on Mg(2+) as a cofactor.

The protein resides in the cell inner membrane. It carries out the reaction diphosphate + H2O + H(+)(in) = 2 phosphate + 2 H(+)(out). Proton pump that utilizes the energy of pyrophosphate hydrolysis as the driving force for proton movement across the membrane. Generates a proton motive force. This is Pyrophosphate-energized proton pump 1 (hppA1) from Rhizobium leguminosarum bv. trifolii.